An 84-amino-acid chain; its full sequence is Small ribosomal subunit protein uS17 (84 aa).

It belongs to the universal ribosomal protein uS17 family. Part of the 30S ribosomal subunit.

In terms of biological role, one of the primary rRNA binding proteins, it binds specifically to the 5'-end of 16S ribosomal RNA. The polypeptide is Small ribosomal subunit protein uS17 (Pectobacterium atrosepticum (strain SCRI 1043 / ATCC BAA-672) (Erwinia carotovora subsp. atroseptica)).